We begin with the raw amino-acid sequence, 468 residues long: RUS family member 1 (468 aa).

Position 2 is an N-acetylalanine (A2). T49 is modified (phosphothreonine). The chain crosses the membrane as a helical span at residues 247–267 (LLMLPLVSGCPGFSLGCFFFL).

This sequence belongs to the RUS1 family.

It localises to the membrane. The polypeptide is RUS family member 1 (Rusf1) (Pongo abelii (Sumatran orangutan)).